A 1257-amino-acid polypeptide reads, in one-letter code: Phosphatidylinositol 3,4,5-trisphosphate 5-phosphatase 2 (1257 aa).

Residues 21–117 (WYHRDLSRAA…GLVCALLLPV (97 aa)) enclose the SH2 domain. Positions 119–132 (GEREPDPPDDRDAS) are enriched in basic and acidic residues. Residues 119-181 (GEREPDPPDD…ESTPNGLSTV (63 aa)) form a disordered region. Phosphoserine is present on serine 132. Residues 156–166 (PSSPLPAPETP) are compositionally biased toward pro residues. Residue threonine 165 is modified to Phosphothreonine. Phosphoserine occurs at positions 241 and 353. Residue tyrosine 887 is modified to Phosphotyrosine. Phosphoserine is present on serine 891. Positions 897–986 (TGAKSKAPSV…PPKNSFNNPA (90 aa)) are disordered. The span at 939 to 951 (PPPTGRPPAPPRA) shows a compositional bias: pro residues. Residues 945-950 (PPAPPR) carry the SH3-binding motif. The segment covering 952–966 (VPREESLNPRLKSEG) has biased composition (basic and acidic residues). The short motif at 984–987 (NPAY) is the NPXY motif element. Tyrosine 987 bears the Phosphotyrosine mark. Residues 1004-1115 (SFARAPIPPT…PASTFLEEVA (112 aa)) are disordered. 2 stretches are compositionally biased toward pro residues: residues 1049–1060 (LPPPDFPPPPLP) and 1088–1104 (GPPP…PPGT). Serine 1132 carries the post-translational modification Phosphoserine. Residues tyrosine 1136 and tyrosine 1161 each carry the phosphotyrosine modification. The 63-residue stretch at 1195–1257 (LGEAGMGAWL…LLLDTLQLSK (63 aa)) folds into the SAM domain. At serine 1256 the chain carries Phosphoserine.

Belongs to the inositol 1,4,5-trisphosphate 5-phosphatase family. In terms of assembly, interacts with tyrosine phosphorylated form of SHC1. Interacts with EGFR. Upon stimulation by the EGF signaling pathway, it forms a complex with SHC1 and EGFR. Interacts with cytoskeletal protein SORBS3/vinexin, promoting its localization to the periphery of cells. Forms a complex with filamin (FLNA or FLNB), actin, GPIb (GP1BA or GP1BB) that regulates cortical and submembraneous actin. Interacts with c-Met/MET, when c-Met/MET is phosphorylated on 'Tyr-1356'. Interacts with p130Cas/BCAR1. Interacts with CENTD3/ARAP3 via its SAM domain. Interacts with c-Cbl/CBL and CAP/SORBS1. Interacts with activated EPHA2 receptor. Interacts with receptors FCGR2A. Interacts with FCGR2B. Interacts with tyrosine kinase ABL1. Interacts with tyrosine kinase TEC. Interacts with CSF1R. Interacts (via N-terminus) with SH3YL1 (via SH3 domain). Interacts (via SH2 domain) with tyrosine phosphorylated KLRC1 (via ITIM). Interacts with NEDD9/HEF1. Tyrosine phosphorylated by the members of the SRC family after exposure to a diverse array of extracellular stimuli such as insulin, growth factors such as EGF or PDGF, chemokines, integrin ligands and hypertonic and oxidative stress. May be phosphorylated upon IgG receptor FCGR2B-binding. Phosphorylated at Tyr-987 following cell attachment and spreading. Phosphorylated at Tyr-1161 following EGF signaling pathway stimulation.

Its subcellular location is the cytoplasm. It localises to the cytosol. It is found in the cytoskeleton. The protein localises to the membrane. The protein resides in the cell projection. Its subcellular location is the filopodium. It localises to the lamellipodium. It is found in the basal cell membrane. The protein localises to the nucleus. The protein resides in the nucleus speckle. Its subcellular location is the spindle pole. The catalysed reaction is a 1,2-diacyl-sn-glycero-3-phospho-(1D-myo-inositol-3,4,5-trisphosphate) + H2O = a 1,2-diacyl-sn-glycero-3-phospho-(1D-myo-inositol-3,4-bisphosphate) + phosphate. It carries out the reaction 1,2-dioctanoyl-sn-glycero-3-phospho-(1D-myo-inositol-3,4,5-trisphosphate) + H2O = 1,2-dioctanoyl-sn-glycero-3-phospho-(1D-myo-inositol-3,4-bisphosphate) + phosphate. It catalyses the reaction 1,2-dihexadecanoyl-sn-glycero-3-phospho-(1D-myo-inositol-3,4,5-trisphosphate) + H2O = 1,2-dihexadecanoyl-sn-glycero-3-phospho-(1D-myo-inositol-3,4-bisphosphate) + phosphate. With respect to regulation, activated upon translocation to the sites of synthesis of PtdIns(3,4,5)P3 in the membrane. Enzymatic activity is enhanced in the presence of phosphatidylserine. Phosphatidylinositol (PtdIns) phosphatase that specifically hydrolyzes the 5-phosphate of phosphatidylinositol-3,4,5-trisphosphate (PtdIns(3,4,5)P3) to produce PtdIns(3,4)P2, thereby negatively regulating the PI3K (phosphoinositide 3-kinase) pathways. Required for correct mitotic spindle orientation and therefore progression of mitosis. Plays a central role in regulation of PI3K-dependent insulin signaling, although the precise molecular mechanisms and signaling pathways remain unclear. While overexpression reduces both insulin-stimulated MAP kinase and Akt activation, its absence does not affect insulin signaling or GLUT4 trafficking. Confers resistance to dietary obesity. May act by regulating AKT2, but not AKT1, phosphorylation at the plasma membrane. Part of a signaling pathway that regulates actin cytoskeleton remodeling. Required for the maintenance and dynamic remodeling of actin structures as well as in endocytosis, having a major impact on ligand-induced EGFR internalization and degradation. Participates in regulation of cortical and submembraneous actin by hydrolyzing PtdIns(3,4,5)P3 thereby regulating membrane ruffling. Regulates cell adhesion and cell spreading. Required for HGF-mediated lamellipodium formation, cell scattering and spreading. Acts as a negative regulator of EPHA2 receptor endocytosis by inhibiting via PI3K-dependent Rac1 activation. Acts as a regulator of neuritogenesis by regulating PtdIns(3,4,5)P3 level and is required to form an initial protrusive pattern, and later, maintain proper neurite outgrowth. Acts as a negative regulator of the FC-gamma-RIIA receptor (FCGR2A). Mediates signaling from the FC-gamma-RIIB receptor (FCGR2B), playing a central role in terminating signal transduction from activating immune/hematopoietic cell receptor systems. Involved in EGF signaling pathway. Upon stimulation by EGF, it is recruited by EGFR and dephosphorylates PtdIns(3,4,5)P3. Plays a negative role in regulating the PI3K-PKB pathway, possibly by inhibiting PKB activity. Down-regulates Fc-gamma-R-mediated phagocytosis in macrophages independently of INPP5D/SHIP1. In macrophages, down-regulates NF-kappa-B-dependent gene transcription by regulating macrophage colony-stimulating factor (M-CSF)-induced signaling. Plays a role in the localization of AURKA and NEDD9/HEF1 to the basolateral membrane at interphase in polarized cysts, thereby mediates cell cycle homeostasis, cell polarization and cilia assembly. Additionally promotion of cilia growth is also facilitated by hydrolysis of (PtdIns(3,4,5)P3) to PtdIns(3,4)P2. Promotes formation of apical membrane-initiation sites during the initial stages of lumen formation via Rho family-induced actin filament organization and CTNNB1 localization to cell-cell contacts. May also hydrolyze PtdIns(1,3,4,5)P4, and could thus affect the levels of the higher inositol polyphosphates like InsP6. Involved in endochondral ossification. The polypeptide is Phosphatidylinositol 3,4,5-trisphosphate 5-phosphatase 2 (Rattus norvegicus (Rat)).